We begin with the raw amino-acid sequence, 405 residues long: DNA polymerase processivity factor (405 aa).

Residues 354-376 (GAGVKRRASEEEESDQPPKKLFP) form a disordered region. The Bipartite nuclear localization signal motif lies at 358-373 (KRRASEEEESDQPPKK).

Belongs to the herpesviridae DNA polymerase processivity factor family. As to quaternary structure, interacts with the DNA polymerase catalytic subunit. Interacts with the origin-binding protein.

The protein localises to the host nucleus. In terms of biological role, plays an essential role in viral DNA replication by acting as the polymerase accessory subunit. Associates with the viral polymerase to increase its processivity and forms high-affinity direct interactions with DNA. Facilitates the origin-binding protein loading onto DNA thus increasing its ability to assemble into a functional complex capable of unwinding duplex DNA. The sequence is that of DNA polymerase processivity factor from Equine herpesvirus 1 (strain Ab4p) (EHV-1).